The sequence spans 315 residues: tRNA dimethylallyltransferase (315 aa).

9-16 (GPTASGKT) is a binding site for ATP. A substrate-binding site is contributed by 11-16 (TASGKT). 2 interaction with substrate tRNA regions span residues 34-37 (DSLL) and 158-162 (QRIQR).

This sequence belongs to the IPP transferase family. In terms of assembly, monomer. Requires Mg(2+) as cofactor.

It carries out the reaction adenosine(37) in tRNA + dimethylallyl diphosphate = N(6)-dimethylallyladenosine(37) in tRNA + diphosphate. In terms of biological role, catalyzes the transfer of a dimethylallyl group onto the adenine at position 37 in tRNAs that read codons beginning with uridine, leading to the formation of N6-(dimethylallyl)adenosine (i(6)A). The polypeptide is tRNA dimethylallyltransferase (Acidithiobacillus ferrooxidans (strain ATCC 53993 / BNL-5-31) (Leptospirillum ferrooxidans (ATCC 53993))).